We begin with the raw amino-acid sequence, 356 residues long: Phosphate acyltransferase (356 aa).

It belongs to the PlsX family. In terms of assembly, homodimer. Probably interacts with PlsY.

It is found in the cytoplasm. The catalysed reaction is a fatty acyl-[ACP] + phosphate = an acyl phosphate + holo-[ACP]. Its pathway is lipid metabolism; phospholipid metabolism. Functionally, catalyzes the reversible formation of acyl-phosphate (acyl-PO(4)) from acyl-[acyl-carrier-protein] (acyl-ACP). This enzyme utilizes acyl-ACP as fatty acyl donor, but not acyl-CoA. This chain is Phosphate acyltransferase, found in Stutzerimonas stutzeri (strain A1501) (Pseudomonas stutzeri).